The primary structure comprises 37 residues: Large ribosomal subunit protein bL36 (37 aa).

The protein belongs to the bacterial ribosomal protein bL36 family.

This Hydrogenobaculum sp. (strain Y04AAS1) protein is Large ribosomal subunit protein bL36.